Here is a 341-residue protein sequence, read N- to C-terminus: Ferredoxin--NADP reductase (341 aa).

7 residues coordinate FAD: Asp38, Gln46, Tyr51, Val91, Phe125, Asp292, and Thr333.

It belongs to the ferredoxin--NADP reductase type 2 family. Homodimer. Requires FAD as cofactor.

It carries out the reaction 2 reduced [2Fe-2S]-[ferredoxin] + NADP(+) + H(+) = 2 oxidized [2Fe-2S]-[ferredoxin] + NADPH. This is Ferredoxin--NADP reductase from Gluconacetobacter diazotrophicus (strain ATCC 49037 / DSM 5601 / CCUG 37298 / CIP 103539 / LMG 7603 / PAl5).